An 832-amino-acid polypeptide reads, in one-letter code: Protein P (832 aa).

A terminal protein domain (TP) region spans residues 1-177 (MPLSYQHFRK…FCGSPYSWEQ (177 aa)). The tract at residues 178–335 (ELQHGAESFN…HCLSHLVNLL (158 aa)) is spacer. Polar residues-rich tracts occupy residues 205–220 (SKHQQSRLGLQPQQGQ) and 251–263 (SGHNNNSASESAS). Positions 205 to 263 (SKHQQSRLGLQPQQGQLAKGQRGRSGSVRSRAHSATRRSVGVEPSGSGHNNNSASESAS) are disordered. Residues 336–679 (EDWGPCTEHG…YATLYPVARQ (344 aa)) are polymerase/reverse transcriptase domain (RT). Residues 346–589 (KHHIRIPRTP…YSLNFMGYVI (244 aa)) enclose the Reverse transcriptase domain. Positions 418, 540, and 541 each coordinate Mg(2+).

Belongs to the hepadnaviridae P protein family.

The catalysed reaction is DNA(n) + a 2'-deoxyribonucleoside 5'-triphosphate = DNA(n+1) + diphosphate. The enzyme catalyses Endonucleolytic cleavage to 5'-phosphomonoester.. With respect to regulation, activated by host HSP70 and HSP40 in vitro to be able to bind the epsilon loop of the pgRNA. Because deletion of the RNase H region renders the protein partly chaperone-independent, the chaperones may be needed indirectly to relieve occlusion of the RNA-binding site by this domain. Inhibited by several reverse-transcriptase inhibitors: Lamivudine, Adefovir and Entecavir. Its function is as follows. Multifunctional enzyme that converts the viral RNA genome into dsDNA in viral cytoplasmic capsids. This enzyme displays a DNA polymerase activity that can copy either DNA or RNA templates, and a ribonuclease H (RNase H) activity that cleaves the RNA strand of RNA-DNA heteroduplexes in a partially processive 3'- to 5'-endonucleasic mode. Neo-synthesized pregenomic RNA (pgRNA) are encapsidated together with the P protein, and reverse-transcribed inside the nucleocapsid. Initiation of reverse-transcription occurs first by binding the epsilon loop on the pgRNA genome, and is initiated by protein priming, thereby the 5'-end of (-)DNA is covalently linked to P protein. Partial (+)DNA is synthesized from the (-)DNA template and generates the relaxed circular DNA (RC-DNA) genome. After budding and infection, the RC-DNA migrates in the nucleus, and is converted into a plasmid-like covalently closed circular DNA (cccDNA). The activity of P protein does not seem to be necessary for cccDNA generation, and is presumably released from (+)DNA by host nuclear DNA repair machinery. This Gorilla gorilla (western gorilla) protein is Protein P.